A 129-amino-acid chain; its full sequence is MSVPAELKYAKSHEWIKLEADGTVTVGITQHAQELLGDMVFVELPKVGRILAQQEDCAVVESVKAASDIYAPLSGEVIAINAEVESSPEKINEDSYSAWLFKLKPANTAEIDGLLDANGYEKLLESDAH.

Residues 23–104 (TVTVGITQHA…SYSAWLFKLK (82 aa)) enclose the Lipoyl-binding domain. Lysine 64 carries the N6-lipoyllysine modification.

The protein belongs to the GcvH family. As to quaternary structure, the glycine cleavage system is composed of four proteins: P, T, L and H. (R)-lipoate serves as cofactor.

Its function is as follows. The glycine cleavage system catalyzes the degradation of glycine. The H protein shuttles the methylamine group of glycine from the P protein to the T protein. The protein is Glycine cleavage system H protein of Nitrosomonas eutropha (strain DSM 101675 / C91 / Nm57).